Here is a 207-residue protein sequence, read N- to C-terminus: Serotonin N-acetyltransferase (207 aa).

Thr-31 carries the phosphothreonine; by PKA modification. The N-acetyltransferase domain maps to 35 to 194; it reads SEFRCLTPQD…SLTFMELQCS (160 aa). Leu-124 is a binding site for substrate. Acetyl-CoA-binding positions include 124–126 and 132–137; these read LAV and QQGKGS. Met-159 contacts substrate. Residue 168-170 participates in acetyl-CoA binding; sequence YEK. The residue at position 205 (Ser-205) is a Phosphoserine.

Belongs to the acetyltransferase family. AANAT subfamily. Monomer. Interacts with several 14-3-3 proteins, including YWHAB, YWHAE, YWHAG and YWHAZ, preferentially when phosphorylated at Thr-31. Phosphorylation on Ser-205 also allows binding to YWHAZ, but with lower affinity. The interaction with YWHAZ considerably increases affinity for arylalkylamines and acetyl-CoA and protects the enzyme from dephosphorylation and proteasomal degradation. It may also prevent thiol-dependent inactivation. Post-translationally, cAMP-dependent phosphorylation on both N-terminal Thr-31 and C-terminal Ser-205 regulates AANAT activity by promoting interaction with 14-3-3 proteins. Highly expressed in pineal gland and retina. Also detected in heart and intestine.

Its subcellular location is the cytoplasm. The catalysed reaction is a 2-arylethylamine + acetyl-CoA = an N-acetyl-2-arylethylamine + CoA + H(+). It functions in the pathway aromatic compound metabolism; melatonin biosynthesis; melatonin from serotonin: step 1/2. Its function is as follows. Controls the night/day rhythm of melatonin production in the pineal gland. Catalyzes the N-acetylation of serotonin into N-acetylserotonin, the penultimate step in the synthesis of melatonin. The chain is Serotonin N-acetyltransferase (AANAT) from Mesocricetus auratus (Golden hamster).